The sequence spans 81 residues: UPF0349 protein SE_0633 (81 aa).

This sequence belongs to the UPF0349 family.

The protein is UPF0349 protein SE_0633 of Staphylococcus epidermidis (strain ATCC 12228 / FDA PCI 1200).